A 62-amino-acid chain; its full sequence is Small ribosomal subunit protein eS30z/eS30y/eS30x (62 aa).

The tract at residues 1–38 is disordered; that stretch reads MGKVHGSLARAGKVRGQTPKVAKQDKKKKPRGRAHKRL. Positions 25-38 are enriched in basic residues; the sequence is DKKKKPRGRAHKRL.

It belongs to the eukaryotic ribosomal protein eS30 family.

The chain is Small ribosomal subunit protein eS30z/eS30y/eS30x (RPS30A) from Arabidopsis thaliana (Mouse-ear cress).